The primary structure comprises 307 residues: Peroxisomal protein PEX21 (307 aa).

Cysteine 4 is covalently cross-linked (Glycyl cysteine thioester (Cys-Gly) (interchain with G-Cter in ubiquitin)). The segment at 23–52 is disordered; it reads VGRVGGFNRPSGGLGQSSAEQQLQARAGER.

This sequence belongs to the peroxin-21 family. As to quaternary structure, interacts with PEX7. In terms of processing, monoubiquitinated at Cys-4; acts as a signal for PEX21 extraction and is required for proper export from peroxisomes and recycling.

It localises to the cytoplasm. The protein localises to the cytosol. Its subcellular location is the peroxisome. Its function is as follows. Mediates peroxisomal import of proteins containing a C-terminal PTS2-type peroxisomal targeting signal via its interaction with PEX7. Interaction with PEX7 only takes place when PEX7 is associated with cargo proteins containing a PTS2 peroxisomal targeting signal. PEX7 along with PTS2-containing cargo proteins are then translocated through the PEX13-PEX14 docking complex together with PEX21. This Eremothecium gossypii (strain ATCC 10895 / CBS 109.51 / FGSC 9923 / NRRL Y-1056) (Yeast) protein is Peroxisomal protein PEX21 (PEX21).